Here is a 703-residue protein sequence, read N- to C-terminus: Prolyl 3-hydroxylase 2 (703 aa).

A signal peptide spans 1 to 21; sequence MRESTWVSLLLLLLLPAPQRG. The interval 18 to 40 is disordered; that stretch reads PQRGGPQDGRGSPEPEPERGPLQ. 4 TPR repeats span residues 42–75, 144–177, 205–238, and 301–334; these read FDLL…HRRL, RVPY…NPEH, HLES…YFNE, and PLHY…HPDD. Asn-444, Asn-455, and Asn-544 each carry an N-linked (GlcNAc...) asparagine glycan. The Fe2OG dioxygenase domain maps to 552–666; sequence THMVCRTALS…RCAVALWFTL (115 aa). The Fe cation site is built by His-575, Asp-577, and His-647. The active site involves Arg-657. Positions 700–703 match the Prevents secretion from ER motif; the sequence is KDEL.

It belongs to the leprecan family. Fe cation serves as cofactor. Requires L-ascorbate as cofactor. As to expression, detected at low levels in cartilage.

The protein localises to the endoplasmic reticulum. It localises to the sarcoplasmic reticulum. Its subcellular location is the golgi apparatus. It carries out the reaction L-prolyl-[collagen] + 2-oxoglutarate + O2 = trans-3-hydroxy-L-prolyl-[collagen] + succinate + CO2. In terms of biological role, prolyl 3-hydroxylase that catalyzes the post-translational formation of 3-hydroxyproline on collagens. Contributes to proline 3-hydroxylation of collagen COL4A1 and COL1A1 in tendons, the eye sclera and in the eye lens capsule. Has high activity with the type IV collagen COL4A1, and lower activity with COL1A1. Catalyzes hydroxylation of the first Pro in Gly-Pro-Hyp sequences where Hyp is 4-hydroxyproline. Has no activity on substrates that lack 4-hydroxyproline in the third position. The sequence is that of Prolyl 3-hydroxylase 2 from Rattus norvegicus (Rat).